An 887-amino-acid polypeptide reads, in one-letter code: Alanine--tRNA ligase (887 aa).

Zn(2+) contacts are provided by His563, His567, Cys677, and His681.

Belongs to the class-II aminoacyl-tRNA synthetase family. Zn(2+) serves as cofactor.

The protein resides in the cytoplasm. It catalyses the reaction tRNA(Ala) + L-alanine + ATP = L-alanyl-tRNA(Ala) + AMP + diphosphate. In terms of biological role, catalyzes the attachment of alanine to tRNA(Ala) in a two-step reaction: alanine is first activated by ATP to form Ala-AMP and then transferred to the acceptor end of tRNA(Ala). Also edits incorrectly charged Ser-tRNA(Ala) and Gly-tRNA(Ala) via its editing domain. The chain is Alanine--tRNA ligase from Dinoroseobacter shibae (strain DSM 16493 / NCIMB 14021 / DFL 12).